A 169-amino-acid chain; its full sequence is Putative phosphoesterase SERP0604 (169 aa).

Residue H34 is the Proton donor of the active site. 2 short sequence motifs (HXTX) span residues 34–37 (HITI) and 115–118 (HFTI). H115 serves as the catalytic Proton acceptor.

It belongs to the 2H phosphoesterase superfamily. YjcG family.

The protein is Putative phosphoesterase SERP0604 of Staphylococcus epidermidis (strain ATCC 35984 / DSM 28319 / BCRC 17069 / CCUG 31568 / BM 3577 / RP62A).